A 197-amino-acid chain; its full sequence is Xanthine phosphoribosyltransferase (197 aa).

2 residues coordinate xanthine: Leu-20 and Asn-27. Residue 128–132 (ANGQA) participates in 5-phospho-alpha-D-ribose 1-diphosphate binding. Lys-156 serves as a coordination point for xanthine.

Belongs to the purine/pyrimidine phosphoribosyltransferase family. Xpt subfamily. As to quaternary structure, homodimer.

The protein resides in the cytoplasm. It carries out the reaction XMP + diphosphate = xanthine + 5-phospho-alpha-D-ribose 1-diphosphate. The protein operates within purine metabolism; XMP biosynthesis via salvage pathway; XMP from xanthine: step 1/1. Converts the preformed base xanthine, a product of nucleic acid breakdown, to xanthosine 5'-monophosphate (XMP), so it can be reused for RNA or DNA synthesis. This chain is Xanthine phosphoribosyltransferase, found in Bacillus thuringiensis (strain Al Hakam).